We begin with the raw amino-acid sequence, 514 residues long: CBL-interacting protein kinase 25 (514 aa).

The Protein kinase domain occupies 21–281; that stretch reads YEFGPLVGEG…IPEIMEMRWF (261 aa). ATP contacts are provided by residues 27–35 and lysine 50; that span reads VGEGNFAKV. The Proton acceptor role is filled by aspartate 149. The activation loop stretch occupies residues 167-196; the sequence is DFGLSALADMERREAHLQTVCGTPLFLAPE. The interval 303–340 is disordered; the sequence is GLDGEPELYDSDTDTIESSSSSESPTPVAGTPRGMHTS. The span at 304-317 shows a compositional bias: acidic residues; the sequence is LDGEPELYDSDTDT. Positions 318–329 are enriched in low complexity; sequence IESSSSSESPTP. An NAF domain is found at 323-395; it reads SSESPTPVAG…PSFDLSGLFE (73 aa). Residues 398 to 427 are PPI; the sequence is GERMRFVSGAPVADIIAKLQEIAGMVSFTA.

The protein belongs to the protein kinase superfamily. CAMK Ser/Thr protein kinase family. SNF1 subfamily. Requires Mn(2+) as cofactor.

The catalysed reaction is L-seryl-[protein] + ATP = O-phospho-L-seryl-[protein] + ADP + H(+). It catalyses the reaction L-threonyl-[protein] + ATP = O-phospho-L-threonyl-[protein] + ADP + H(+). Its function is as follows. CIPK serine-threonine protein kinases interact with CBL proteins. Binding of a CBL protein to the regulatory NAF domain of CIPK protein lead to the activation of the kinase in a calcium-dependent manner. This Oryza sativa subsp. japonica (Rice) protein is CBL-interacting protein kinase 25 (CIPK25).